The chain runs to 466 residues: Glutamate--tRNA ligase (466 aa).

Residues 10-20 (PSPTGYLHIGG) carry the 'HIGH' region motif. The 'KMSKS' region signature appears at 237–241 (RLSKR). Lysine 240 contacts ATP.

It belongs to the class-I aminoacyl-tRNA synthetase family. Glutamate--tRNA ligase type 1 subfamily. In terms of assembly, monomer.

The protein localises to the cytoplasm. The catalysed reaction is tRNA(Glu) + L-glutamate + ATP = L-glutamyl-tRNA(Glu) + AMP + diphosphate. Catalyzes the attachment of glutamate to tRNA(Glu) in a two-step reaction: glutamate is first activated by ATP to form Glu-AMP and then transferred to the acceptor end of tRNA(Glu). In Syntrophotalea carbinolica (strain DSM 2380 / NBRC 103641 / GraBd1) (Pelobacter carbinolicus), this protein is Glutamate--tRNA ligase.